The chain runs to 407 residues: Proteasome-activating nucleotidase (407 aa).

Positions 22–67 (KEKTQIAELESKVLRLELKNKDINRENVQIKKENEILKRELDKLRI) form a coiled coil. Residues 192–197 (GTGKTL) and His331 each bind ATP. Residues 405-407 (MYG) are docks into pockets in the proteasome alpha-ring to cause gate opening.

This sequence belongs to the AAA ATPase family. In terms of assembly, homohexamer. The hexameric complex has a two-ring architecture resembling a top hat that caps the 20S proteasome core at one or both ends. Upon ATP-binding, the C-terminus of PAN interacts with the alpha-rings of the proteasome core by binding to the intersubunit pockets.

Its subcellular location is the cytoplasm. In terms of biological role, ATPase which is responsible for recognizing, binding, unfolding and translocation of substrate proteins into the archaeal 20S proteasome core particle. Is essential for opening the gate of the 20S proteasome via an interaction with its C-terminus, thereby allowing substrate entry and access to the site of proteolysis. Thus, the C-termini of the proteasomal ATPase function like a 'key in a lock' to induce gate opening and therefore regulate proteolysis. Unfolding activity requires energy from ATP hydrolysis, whereas ATP binding alone promotes ATPase-20S proteasome association which triggers gate opening, and supports translocation of unfolded substrates. The polypeptide is Proteasome-activating nucleotidase (Methanococcus maripaludis (strain DSM 14266 / JCM 13030 / NBRC 101832 / S2 / LL)).